Here is a 96-residue protein sequence, read N- to C-terminus: MTATLLTAEQLSSVAEKLPGWTLADQRLQRQWRFRNFVEAFGFMTRVALLAEAMNHHPEWSNVYATVTIELTTHDVNGLSDRDLKLAEAINLLEPG.

The protein belongs to the pterin-4-alpha-carbinolamine dehydratase family.

The catalysed reaction is (4aS,6R)-4a-hydroxy-L-erythro-5,6,7,8-tetrahydrobiopterin = (6R)-L-erythro-6,7-dihydrobiopterin + H2O. The sequence is that of Putative pterin-4-alpha-carbinolamine dehydratase from Prochlorococcus marinus (strain MIT 9313).